Consider the following 365-residue polypeptide: MGRITSFADLIGRIKDKASQSKAALVSSNTKSKTLSFHLSVLRATTHDPSTPPGNRHLAVILSAGTGSRATASSAVESIMERLHTTGDACVALKSLIIIHHIVKHGRFILQDQLSVFPASGGRNYLKLSAFRDEKSPLMWELSSWVRWYALYLEHLLSTSRIMGFFISSTSSTIHKEEYEEMVSSLTNSDLLREIDALVGLLEEACKIPDLPFSGGKSLADKITQLVGEDYVSSINELYTRFNEFKERSNTLSFGDTIELVCALKRLESCKERLSEICHGNWKRGWIDGFWGLVLEVKGIIGNLEDNYGQIEKSIVGFGKRDKGYESARFTDRLIIGYSNPVRFSSGRFSNVDRFNFPVSGRVLC.

The region spanning 29–167 (NTKSKTLSFH…STSRIMGFFI (139 aa)) is the ENTH domain.

The protein resides in the membrane. The protein localises to the clathrin-coated pit. It is found in the golgi apparatus. Its subcellular location is the cytoplasmic vesicle. It localises to the clathrin-coated vesicle. The sequence is that of Putative clathrin assembly protein At4g40080 from Arabidopsis thaliana (Mouse-ear cress).